Consider the following 126-residue polypeptide: Large ribosomal subunit protein bL12 (126 aa).

This sequence belongs to the bacterial ribosomal protein bL12 family. Homodimer. Part of the ribosomal stalk of the 50S ribosomal subunit. Forms a multimeric L10(L12)X complex, where L10 forms an elongated spine to which 2 to 4 L12 dimers bind in a sequential fashion. Binds GTP-bound translation factors.

Forms part of the ribosomal stalk which helps the ribosome interact with GTP-bound translation factors. Is thus essential for accurate translation. The protein is Large ribosomal subunit protein bL12 of Corynebacterium diphtheriae (strain ATCC 700971 / NCTC 13129 / Biotype gravis).